Consider the following 112-residue polypeptide: Putative pterin-4-alpha-carbinolamine dehydratase (112 aa).

The protein belongs to the pterin-4-alpha-carbinolamine dehydratase family.

It carries out the reaction (4aS,6R)-4a-hydroxy-L-erythro-5,6,7,8-tetrahydrobiopterin = (6R)-L-erythro-6,7-dihydrobiopterin + H2O. The sequence is that of Putative pterin-4-alpha-carbinolamine dehydratase from Shewanella loihica (strain ATCC BAA-1088 / PV-4).